We begin with the raw amino-acid sequence, 738 residues long: Ethylene receptor (738 aa).

Transmembrane regions (helical) follow at residues 23 to 43, 54 to 74, and 89 to 109; these read ISDF…IYFV, VLVQ…INLW, and IAKV…VHII. 2 residues coordinate Cu cation: Cys-65 and His-69. One can recognise a GAF domain in the interval 158-307; sequence DRHTILRTTL…VVADQVAVAL (150 aa). The 240-residue stretch at 350 to 589 folds into the Histidine kinase domain; it reads VMNHEMRTPM…IFIVKLGIPE (240 aa). A Phosphohistidine; by autocatalysis modification is found at His-353. The Response regulatory domain maps to 615–730; sequence KVLLMDDNGV…KMRSVLSDLL (116 aa). Asp-663 is modified (4-aspartylphosphate).

Belongs to the ethylene receptor family. Homodimer; disulfide-linked. Requires Cu cation as cofactor. Post-translationally, activation probably requires a transfer of a phosphate group between a His in the transmitter domain and an Asp of the receiver domain. In terms of tissue distribution, higher expression in arils than in seeds.

The protein localises to the endoplasmic reticulum membrane. The catalysed reaction is ATP + protein L-histidine = ADP + protein N-phospho-L-histidine.. In terms of biological role, may act early in the ethylene signal transduction pathway, possibly as an ethylene receptor, or as a regulator of the pathway. The sequence is that of Ethylene receptor (ETR1) from Passiflora edulis (Passion fruit).